We begin with the raw amino-acid sequence, 304 residues long: Ribonuclease Z (304 aa).

The Zn(2+) site is built by histidine 63, histidine 65, aspartate 67, histidine 68, histidine 143, aspartate 213, and histidine 271. Aspartate 67 functions as the Proton acceptor in the catalytic mechanism.

This sequence belongs to the RNase Z family. Homodimer. It depends on Zn(2+) as a cofactor.

The enzyme catalyses Endonucleolytic cleavage of RNA, removing extra 3' nucleotides from tRNA precursor, generating 3' termini of tRNAs. A 3'-hydroxy group is left at the tRNA terminus and a 5'-phosphoryl group is left at the trailer molecule.. In terms of biological role, zinc phosphodiesterase, which displays some tRNA 3'-processing endonuclease activity. Probably involved in tRNA maturation, by removing a 3'-trailer from precursor tRNA. This is Ribonuclease Z from Bacteroides fragilis (strain ATCC 25285 / DSM 2151 / CCUG 4856 / JCM 11019 / LMG 10263 / NCTC 9343 / Onslow / VPI 2553 / EN-2).